A 165-amino-acid chain; its full sequence is Small ribosomal subunit protein uS5 (165 aa).

Residues 13-76 enclose the S5 DRBM domain; the sequence is LEEKVLVVNR…EAARKNLITI (64 aa).

The protein belongs to the universal ribosomal protein uS5 family. In terms of assembly, part of the 30S ribosomal subunit. Contacts proteins S4 and S8.

In terms of biological role, with S4 and S12 plays an important role in translational accuracy. Functionally, located at the back of the 30S subunit body where it stabilizes the conformation of the head with respect to the body. This is Small ribosomal subunit protein uS5 from Chlamydia felis (strain Fe/C-56) (Chlamydophila felis).